The primary structure comprises 604 residues: Uptake hydrogenase large subunit (604 aa).

Positions 76, 79, 583, and 586 each coordinate Ni(2+).

Belongs to the [NiFe]/[NiFeSe] hydrogenase large subunit family. In terms of assembly, heterodimer of a large and a small subunit. It depends on Ni(2+) as a cofactor.

The protein localises to the cell membrane. It catalyses the reaction H2 + A = AH2. Its function is as follows. This enzyme recycles the H(2) produced by nitrogenase to increase the production of ATP and to protect nitrogenase against inhibition or damage by O(2) under carbon- or phosphate-limited conditions. The polypeptide is Uptake hydrogenase large subunit (hoxL) (Afipia carboxidovorans (strain ATCC 49405 / DSM 1227 / KCTC 32145 / OM5) (Oligotropha carboxidovorans)).